The primary structure comprises 603 residues: Elongation factor 4 (603 aa).

One can recognise a tr-type G domain in the interval 7–191; it reads DNIRNFSIVA…AIVTRLPPPK (185 aa). GTP is bound by residues 19-24 and 138-141; these read DHGKST and NKVD.

It belongs to the TRAFAC class translation factor GTPase superfamily. Classic translation factor GTPase family. LepA subfamily.

Its subcellular location is the cell inner membrane. It carries out the reaction GTP + H2O = GDP + phosphate + H(+). Its function is as follows. Required for accurate and efficient protein synthesis under certain stress conditions. May act as a fidelity factor of the translation reaction, by catalyzing a one-codon backward translocation of tRNAs on improperly translocated ribosomes. Back-translocation proceeds from a post-translocation (POST) complex to a pre-translocation (PRE) complex, thus giving elongation factor G a second chance to translocate the tRNAs correctly. Binds to ribosomes in a GTP-dependent manner. This is Elongation factor 4 from Rhodopseudomonas palustris (strain ATCC BAA-98 / CGA009).